Consider the following 133-residue polypeptide: Protein NrdI (133 aa).

Belongs to the NrdI family.

In terms of biological role, probably involved in ribonucleotide reductase function. The polypeptide is Protein NrdI (Escherichia coli O17:K52:H18 (strain UMN026 / ExPEC)).